The following is a 59-amino-acid chain: Large ribosomal subunit protein uL30 (59 aa).

The protein belongs to the universal ribosomal protein uL30 family. Part of the 50S ribosomal subunit.

This chain is Large ribosomal subunit protein uL30, found in Hydrogenobaculum sp. (strain Y04AAS1).